The sequence spans 620 residues: 1-deoxy-D-xylulose-5-phosphate synthase (620 aa).

Thiamine diphosphate-binding positions include H80 and 121–123; that span reads GHS. D152 contacts Mg(2+). Thiamine diphosphate is bound by residues 153–154, N181, Y288, and E370; that span reads GA. N181 is a binding site for Mg(2+).

This sequence belongs to the transketolase family. DXPS subfamily. As to quaternary structure, homodimer. The cofactor is Mg(2+). Requires thiamine diphosphate as cofactor.

It catalyses the reaction D-glyceraldehyde 3-phosphate + pyruvate + H(+) = 1-deoxy-D-xylulose 5-phosphate + CO2. It functions in the pathway metabolic intermediate biosynthesis; 1-deoxy-D-xylulose 5-phosphate biosynthesis; 1-deoxy-D-xylulose 5-phosphate from D-glyceraldehyde 3-phosphate and pyruvate: step 1/1. Catalyzes the acyloin condensation reaction between C atoms 2 and 3 of pyruvate and glyceraldehyde 3-phosphate to yield 1-deoxy-D-xylulose-5-phosphate (DXP). This Escherichia coli O139:H28 (strain E24377A / ETEC) protein is 1-deoxy-D-xylulose-5-phosphate synthase.